We begin with the raw amino-acid sequence, 435 residues long: 4-hydroxy-3-methylbut-2-en-1-yl diphosphate synthase (flavodoxin) (435 aa).

The segment covering 1-15 (MTDVDLRARPQEGMK) has biased composition (basic and acidic residues). The disordered stretch occupies residues 1 to 24 (MTDVDLRARPQEGMKEIPAGPKGR). Residues Cys-316, Cys-319, Cys-362, and Glu-369 each coordinate [4Fe-4S] cluster.

This sequence belongs to the IspG family. [4Fe-4S] cluster serves as cofactor.

It carries out the reaction (2E)-4-hydroxy-3-methylbut-2-enyl diphosphate + oxidized [flavodoxin] + H2O + 2 H(+) = 2-C-methyl-D-erythritol 2,4-cyclic diphosphate + reduced [flavodoxin]. It participates in isoprenoid biosynthesis; isopentenyl diphosphate biosynthesis via DXP pathway; isopentenyl diphosphate from 1-deoxy-D-xylulose 5-phosphate: step 5/6. In terms of biological role, converts 2C-methyl-D-erythritol 2,4-cyclodiphosphate (ME-2,4cPP) into 1-hydroxy-2-methyl-2-(E)-butenyl 4-diphosphate. The chain is 4-hydroxy-3-methylbut-2-en-1-yl diphosphate synthase (flavodoxin) from Afipia carboxidovorans (strain ATCC 49405 / DSM 1227 / KCTC 32145 / OM5) (Oligotropha carboxidovorans).